A 303-amino-acid polypeptide reads, in one-letter code: Bifunctional protein FolD (303 aa).

NADP(+) contacts are provided by residues 168 to 170 (GRS), Thr197, and Val238.

This sequence belongs to the tetrahydrofolate dehydrogenase/cyclohydrolase family. As to quaternary structure, homodimer.

The catalysed reaction is (6R)-5,10-methylene-5,6,7,8-tetrahydrofolate + NADP(+) = (6R)-5,10-methenyltetrahydrofolate + NADPH. The enzyme catalyses (6R)-5,10-methenyltetrahydrofolate + H2O = (6R)-10-formyltetrahydrofolate + H(+). Its pathway is one-carbon metabolism; tetrahydrofolate interconversion. Catalyzes the oxidation of 5,10-methylenetetrahydrofolate to 5,10-methenyltetrahydrofolate and then the hydrolysis of 5,10-methenyltetrahydrofolate to 10-formyltetrahydrofolate. The chain is Bifunctional protein FolD from Desulfosudis oleivorans (strain DSM 6200 / JCM 39069 / Hxd3) (Desulfococcus oleovorans).